A 421-amino-acid chain; its full sequence is Peroxisomal succinyl-coenzyme A thioesterase (421 aa).

Residue Ser232 is the Charge relay system of the active site. Lys313 is modified (N6-succinyllysine). Catalysis depends on charge relay system residues Asp326 and His360. Positions 419-421 (CRL) match the Microbody targeting signal motif.

It belongs to the C/M/P thioester hydrolase family. In terms of tissue distribution, mainly expressed in liver and kidney. Weakly expressed in other tissues including intestine, adrenal gland and adipose tissues.

It localises to the peroxisome. The enzyme catalyses succinyl-CoA + H2O = succinate + CoA + H(+). The catalysed reaction is glutaryl-CoA + H2O = glutarate + CoA + H(+). The protein operates within lipid metabolism; fatty acid metabolism. Its function is as follows. Catalyzes the hydrolysis of acyl-CoAs into free fatty acids and coenzyme A (CoASH), regulating their respective intracellular levels. In contrast to its human ortholog, functions essentially as a succinyl-CoA thioesterase with no activity with medium to long chain saturated acyl-CoAs and with a low activity toward glutaryl-CoA. In Mus musculus (Mouse), this protein is Peroxisomal succinyl-coenzyme A thioesterase (Acot4).